Consider the following 340-residue polypeptide: Ketol-acid reductoisomerase (NADP(+)) (340 aa).

Residues 1 to 182 (MRVYYDRDCD…GGGRSGIIET (182 aa)) form the KARI N-terminal Rossmann domain. NADP(+) contacts are provided by residues 24–27 (YGSQ), Arg-48, Ser-51, Ser-53, and 83–86 (DELQ). His-108 is an active-site residue. NADP(+) is bound at residue Gly-134. The KARI C-terminal knotted domain maps to 183-329 (NFRQECETDL…EKLRGMMPWI (147 aa)). Residues Asp-191, Glu-195, Glu-227, and Glu-231 each contribute to the Mg(2+) site. Ser-252 serves as a coordination point for substrate.

This sequence belongs to the ketol-acid reductoisomerase family. Mg(2+) is required as a cofactor.

The enzyme catalyses (2R)-2,3-dihydroxy-3-methylbutanoate + NADP(+) = (2S)-2-acetolactate + NADPH + H(+). It carries out the reaction (2R,3R)-2,3-dihydroxy-3-methylpentanoate + NADP(+) = (S)-2-ethyl-2-hydroxy-3-oxobutanoate + NADPH + H(+). It functions in the pathway amino-acid biosynthesis; L-isoleucine biosynthesis; L-isoleucine from 2-oxobutanoate: step 2/4. It participates in amino-acid biosynthesis; L-valine biosynthesis; L-valine from pyruvate: step 2/4. Its function is as follows. Involved in the biosynthesis of branched-chain amino acids (BCAA). Catalyzes an alkyl-migration followed by a ketol-acid reduction of (S)-2-acetolactate (S2AL) to yield (R)-2,3-dihydroxy-isovalerate. In the isomerase reaction, S2AL is rearranged via a Mg-dependent methyl migration to produce 3-hydroxy-3-methyl-2-ketobutyrate (HMKB). In the reductase reaction, this 2-ketoacid undergoes a metal-dependent reduction by NADPH to yield (R)-2,3-dihydroxy-isovalerate. The polypeptide is Ketol-acid reductoisomerase (NADP(+)) (Cereibacter sphaeroides (strain ATCC 17029 / ATH 2.4.9) (Rhodobacter sphaeroides)).